Consider the following 211-residue polypeptide: Ion-translocating oxidoreductase complex subunit G (211 aa).

The helical transmembrane segment at 9 to 29 threads the bilayer; it reads GLTLAIFACATTGLVALTQYL. Thr175 is subject to FMN phosphoryl threonine.

This sequence belongs to the RnfG family. In terms of assembly, the complex is composed of six subunits: RnfA, RnfB, RnfC, RnfD, RnfE and RnfG. FMN serves as cofactor.

It localises to the cell inner membrane. Part of a membrane-bound complex that couples electron transfer with translocation of ions across the membrane. The chain is Ion-translocating oxidoreductase complex subunit G from Vibrio parahaemolyticus serotype O3:K6 (strain RIMD 2210633).